A 77-amino-acid chain; its full sequence is Conotoxin Vc6c (77 aa).

Residues 1-22 (MKLTCMVIVAVLFLTANTFVTA) form the signal peptide. The propeptide occupies 23-51 (DDSGNGLENLFSKAHHEIKNPEASNLNKR). Intrachain disulfides connect cysteine 52–cysteine 67, cysteine 59–cysteine 71, and cysteine 66–cysteine 76.

As to expression, expressed by the venom duct.

The protein localises to the secreted. The sequence is that of Conotoxin Vc6c from Conus victoriae (Queen Victoria cone).